A 165-amino-acid polypeptide reads, in one-letter code: REP-associated tyrosine transposase (165 aa).

This sequence belongs to the transposase 17 family. RAYT subfamily. Monomer.

Its activity is regulated as follows. Cleavage occurs in the presence of magnesium, but is much more pronounced with manganese. Functionally, transposase that is always flanked by repeated extragenic palindrome (REP) sequences, which are clustered in structures called bacterial interspersed mosaic elements (BIMEs). RayT catalyzes cleavage and recombination of BIMEs. Binds REP sequences and cleaves BIMEs both upstream and downstream of the REP sequence. Could be important in the creation of BIME variability and amplification. This Escherichia coli (strain K12) protein is REP-associated tyrosine transposase.